Here is a 435-residue protein sequence, read N- to C-terminus: Transcription factor gkaF (435 aa).

Residues 1-19 (MGRPQRGDTAKERRERQDK) are compositionally biased toward basic and acidic residues. Disordered stretches follow at residues 1–40 (MGRPQRGDTAKERRERQDKVTSPPESGPISQSGLSDTVDW), 115–158 (STTA…SSQS), and 231–257 (FSSESASPHVNRPPIQQQQSPSRFLAP). Positions 28 to 40 (PISQSGLSDTVDW) are enriched in polar residues. The segment covering 143 to 158 (SQSSDSSKPSSTSSQS) has biased composition (low complexity).

The protein localises to the nucleus. Its function is as follows. Transcription factor; part of the gene cluster that mediates the biosynthesis of GKK1032, fungal natural products containing a macrocyclic para-cyclophane connected to a decahydrofluorene ring system that show potent antitumor activities. In Penicillium citrinum, this protein is Transcription factor gkaF.